A 272-amino-acid chain; its full sequence is Putative hydro-lyase BRADO2538 (272 aa).

This sequence belongs to the D-glutamate cyclase family.

The sequence is that of Putative hydro-lyase BRADO2538 from Bradyrhizobium sp. (strain ORS 278).